Consider the following 131-residue polypeptide: MSMSDPIADMLTRIRNGQQAQKVSVSMPCSKLKVAIAKVLQDEGYIDGYSIREAGGKPELDVALKYYAGRPVIERIERVSRPGLRVYKGSGDLPRVMNGLGVAIVSTPRGVMTDRAARAGRVGGEVICYVA.

Belongs to the universal ribosomal protein uS8 family. In terms of assembly, part of the 30S ribosomal subunit. Contacts proteins S5 and S12.

One of the primary rRNA binding proteins, it binds directly to 16S rRNA central domain where it helps coordinate assembly of the platform of the 30S subunit. The sequence is that of Small ribosomal subunit protein uS8 from Aromatoleum aromaticum (strain DSM 19018 / LMG 30748 / EbN1) (Azoarcus sp. (strain EbN1)).